Consider the following 692-residue polypeptide: Elongation factor G (692 aa).

Positions 8 to 282 (ENTRNIGIMA…AVIDYLPSPL (275 aa)) constitute a tr-type G domain. Residues 17-24 (AHIDAGKT), 81-85 (DTPGH), and 135-138 (NKMD) each bind GTP.

This sequence belongs to the TRAFAC class translation factor GTPase superfamily. Classic translation factor GTPase family. EF-G/EF-2 subfamily.

The protein localises to the cytoplasm. In terms of biological role, catalyzes the GTP-dependent ribosomal translocation step during translation elongation. During this step, the ribosome changes from the pre-translocational (PRE) to the post-translocational (POST) state as the newly formed A-site-bound peptidyl-tRNA and P-site-bound deacylated tRNA move to the P and E sites, respectively. Catalyzes the coordinated movement of the two tRNA molecules, the mRNA and conformational changes in the ribosome. The chain is Elongation factor G from Bacillus cytotoxicus (strain DSM 22905 / CIP 110041 / 391-98 / NVH 391-98).